Here is a 606-residue protein sequence, read N- to C-terminus: Vacuolar calcium ion transporter (606 aa).

Positions 1–110 are disordered; sequence MSPPRRVSFP…NSLDPNPGLM (110 aa). Residues 1 to 137 lie on the Cytoplasmic side of the membrane; that stretch reads MSPPRRVSFP…PTYWGSMKAA (137 aa). Positions 18–30 are enriched in low complexity; it reads PPLADSPLSSPKL. A compositionally biased stretch (polar residues) spans 36-56; sequence QSSSTPIVSSNLPTDTTNSAS. A helical transmembrane segment spans residues 138 to 158; sequence ITSTWLNVLLVFIPIGWALYL. Over 159-170 the chain is Vacuolar; the sequence is AKHNGGKDSISD. A helical transmembrane segment spans residues 171-191; it reads TAVFCCTFIAIIPLAGLLGFA. Residues 192-204 lie on the Cytoplasmic side of the membrane; sequence TEEAALRLGQTLG. Residues 205-225 form a helical membrane-spanning segment; that stretch reads GLLNATLGNAVELIVAILALI. Residues 226-236 lie on the Vacuolar side of the membrane; it reads KCELQVVQSSL. The helical transmembrane segment at 237 to 257 threads the bilayer; the sequence is VGSILSNILLVLGMCFFAGGV. The Cytoplasmic segment spans residues 258-272; sequence RFAEQAIKSTAAQLN. The chain crosses the membrane as a helical span at residues 273–293; it reads ASLLLIAVIAVLIPSAFHFSI. The Vacuolar portion of the chain corresponds to 294-313; it reads SSSTSNTDASELANGEGADL. The helical transmembrane segment at 314–334 threads the bilayer; sequence LSMSHAVSILLLILYLGYLLF. The Cytoplasmic portion of the chain corresponds to 335–437; the sequence is QMWTHATYYV…EEEEETPQMN (103 aa). The disordered stretch occupies residues 376–434; the sequence is DEEESYSTATTVSDAAVPPSARAEGGEVPATHGPGTAAAETGNRVEHEDAEEEEEEETP. Positions 423 to 433 are enriched in acidic residues; sequence EDAEEEEEEET. The helical transmembrane segment at 438–458 threads the bilayer; sequence VVCTIALMVIDTVLVGVTAEF. The Vacuolar segment spans residues 459 to 477; that stretch reads LVDSINGMVESNPSLSAEW. A helical membrane pass occupies residues 478–498; it reads VGLILLPIVGNAAEHFTAVSV. Topologically, residues 499–505 are cytoplasmic; sequence SVKDKLD. The chain crosses the membrane as a helical span at residues 506 to 526; sequence LSISVAVGSSIQIALFVIPVI. Residues 527 to 535 lie on the Vacuolar side of the membrane; sequence ELLAWTIGK. The helical transmembrane segment at 536–556 threads the bilayer; the sequence is PMTLLFDPYESIVLFLSVLIV. The Cytoplasmic portion of the chain corresponds to 557 to 566; it reads NQTLADGRSN. Residues 567–587 traverse the membrane as a helical segment; it reads WMEGMVLMMLYIIIAVSFWYY. At 588 to 606 the chain is on the vacuolar side; sequence PGSTTATLLGCQDSSSVTG.

Belongs to the Ca(2+):cation antiporter (CaCA) (TC 2.A.19) family.

Its subcellular location is the vacuole membrane. Its function is as follows. Has a role in promoting intracellular calcium ion sequestration via the exchange of calcium ions for hydrogen ions across the vacuolar membrane. The protein is Vacuolar calcium ion transporter of Cryptococcus neoformans var. grubii serotype A (strain H99 / ATCC 208821 / CBS 10515 / FGSC 9487) (Filobasidiella neoformans var. grubii).